A 497-amino-acid chain; its full sequence is Carboxypeptidase Y homolog ARB_02032 (497 aa).

The first 18 residues, Met-1–Ala-18, serve as a signal peptide directing secretion. A glycan (N-linked (GlcNAc...) asparagine) is linked at Asn-88. Ser-204 is a catalytic residue. N-linked (GlcNAc...) asparagine glycans are attached at residues Asn-263 and Asn-393. Residue Asp-403 is part of the active site. A glycan (N-linked (GlcNAc...) asparagine) is linked at Asn-417. His-469 is an active-site residue.

It belongs to the peptidase S10 family.

Its subcellular location is the secreted. The catalysed reaction is Release of a C-terminal amino acid with broad specificity.. In terms of biological role, involved in degradation of small peptides. The polypeptide is Carboxypeptidase Y homolog ARB_02032 (Arthroderma benhamiae (strain ATCC MYA-4681 / CBS 112371) (Trichophyton mentagrophytes)).